The following is a 282-amino-acid chain: Shikimate dehydrogenase (NADP(+)) (282 aa).

Shikimate contacts are provided by residues 15–17 and Thr-62; that span reads SKS. Lys-66 serves as the catalytic Proton acceptor. Asn-87 and Asp-103 together coordinate shikimate. Residues 127 to 131, 151 to 156, and Met-220 each bind NADP(+); these read GAGGA and NRTHTK. A shikimate-binding site is contributed by Tyr-222. Gly-244 contributes to the NADP(+) binding site.

The protein belongs to the shikimate dehydrogenase family. As to quaternary structure, homodimer.

It carries out the reaction shikimate + NADP(+) = 3-dehydroshikimate + NADPH + H(+). It functions in the pathway metabolic intermediate biosynthesis; chorismate biosynthesis; chorismate from D-erythrose 4-phosphate and phosphoenolpyruvate: step 4/7. In terms of biological role, involved in the biosynthesis of the chorismate, which leads to the biosynthesis of aromatic amino acids. Catalyzes the reversible NADPH linked reduction of 3-dehydroshikimate (DHSA) to yield shikimate (SA). This Shewanella baltica (strain OS155 / ATCC BAA-1091) protein is Shikimate dehydrogenase (NADP(+)).